We begin with the raw amino-acid sequence, 213 residues long: ATP synthase subunit b 2 (213 aa).

Residues M1–G45 form a disordered region. A helical membrane pass occupies residues T57–M76.

It belongs to the ATPase B chain family. F-type ATPases have 2 components, F(1) - the catalytic core - and F(0) - the membrane proton channel. F(1) has five subunits: alpha(3), beta(3), gamma(1), delta(1), epsilon(1). F(0) has three main subunits: a(1), b(2) and c(10-14). The alpha and beta chains form an alternating ring which encloses part of the gamma chain. F(1) is attached to F(0) by a central stalk formed by the gamma and epsilon chains, while a peripheral stalk is formed by the delta and b chains.

The protein resides in the cell inner membrane. In terms of biological role, f(1)F(0) ATP synthase produces ATP from ADP in the presence of a proton or sodium gradient. F-type ATPases consist of two structural domains, F(1) containing the extramembraneous catalytic core and F(0) containing the membrane proton channel, linked together by a central stalk and a peripheral stalk. During catalysis, ATP synthesis in the catalytic domain of F(1) is coupled via a rotary mechanism of the central stalk subunits to proton translocation. Component of the F(0) channel, it forms part of the peripheral stalk, linking F(1) to F(0). The b'-subunit is a diverged and duplicated form of b found in plants and photosynthetic bacteria. This is ATP synthase subunit b 2 (atpF2) from Agrobacterium fabrum (strain C58 / ATCC 33970) (Agrobacterium tumefaciens (strain C58)).